We begin with the raw amino-acid sequence, 217 residues long: Pyridoxine/pyridoxamine 5'-phosphate oxidase (217 aa).

Residues 66–71 (RMVLLK), 81–82 (FT), Arg87, Lys88, and Gln110 each bind FMN. Lys71 contributes to the substrate binding site. 3 residues coordinate substrate: Tyr128, Arg132, and Ser136. FMN contacts are provided by residues 145 to 146 (QS) and Trp190. Residue 196-198 (RLH) coordinates substrate. Arg200 provides a ligand contact to FMN.

It belongs to the pyridoxamine 5'-phosphate oxidase family. In terms of assembly, homodimer. It depends on FMN as a cofactor.

It catalyses the reaction pyridoxamine 5'-phosphate + O2 + H2O = pyridoxal 5'-phosphate + H2O2 + NH4(+). It carries out the reaction pyridoxine 5'-phosphate + O2 = pyridoxal 5'-phosphate + H2O2. The protein operates within cofactor metabolism; pyridoxal 5'-phosphate salvage; pyridoxal 5'-phosphate from pyridoxamine 5'-phosphate: step 1/1. Its pathway is cofactor metabolism; pyridoxal 5'-phosphate salvage; pyridoxal 5'-phosphate from pyridoxine 5'-phosphate: step 1/1. In terms of biological role, catalyzes the oxidation of either pyridoxine 5'-phosphate (PNP) or pyridoxamine 5'-phosphate (PMP) into pyridoxal 5'-phosphate (PLP). The polypeptide is Pyridoxine/pyridoxamine 5'-phosphate oxidase (Psychromonas ingrahamii (strain DSM 17664 / CCUG 51855 / 37)).